A 214-amino-acid chain; its full sequence is NADH-ubiquinone oxidoreductase chain 5 (214 aa).

A run of 4 helical transmembrane segments spans residues 14-34, 58-78, 92-112, and 192-212; these read LNTW…TYSI, PLIT…GMII, MPLI…ILAL, and TGLI…MILM.

Belongs to the complex I subunit 5 family.

The protein localises to the mitochondrion inner membrane. The enzyme catalyses a ubiquinone + NADH + 5 H(+)(in) = a ubiquinol + NAD(+) + 4 H(+)(out). In terms of biological role, core subunit of the mitochondrial membrane respiratory chain NADH dehydrogenase (Complex I) that is believed to belong to the minimal assembly required for catalysis. Complex I functions in the transfer of electrons from NADH to the respiratory chain. The immediate electron acceptor for the enzyme is believed to be ubiquinone. The polypeptide is NADH-ubiquinone oxidoreductase chain 5 (MT-ND5) (Anser caerulescens (Snow goose)).